Here is a 408-residue protein sequence, read N- to C-terminus: LL-diaminopimelate aminotransferase (408 aa).

Substrate contacts are provided by Tyr-15 and Gly-42. Residues Tyr-72, 108–109 (SK), Tyr-132, Asn-187, Tyr-218, and 246–248 (SFS) each bind pyridoxal 5'-phosphate. Substrate-binding residues include Lys-109, Tyr-132, and Asn-187. Lys-249 carries the N6-(pyridoxal phosphate)lysine modification. Arg-257 and Asn-292 together coordinate pyridoxal 5'-phosphate. Substrate is bound by residues Asn-292 and Arg-388.

This sequence belongs to the class-I pyridoxal-phosphate-dependent aminotransferase family. LL-diaminopimelate aminotransferase subfamily. As to quaternary structure, homodimer. Pyridoxal 5'-phosphate serves as cofactor.

The enzyme catalyses (2S,6S)-2,6-diaminopimelate + 2-oxoglutarate = (S)-2,3,4,5-tetrahydrodipicolinate + L-glutamate + H2O + H(+). It functions in the pathway amino-acid biosynthesis; L-lysine biosynthesis via DAP pathway; LL-2,6-diaminopimelate from (S)-tetrahydrodipicolinate (aminotransferase route): step 1/1. Involved in the synthesis of meso-diaminopimelate (m-DAP or DL-DAP), required for both lysine and peptidoglycan biosynthesis. Catalyzes the direct conversion of tetrahydrodipicolinate to LL-diaminopimelate. Is also able to catalyze the reverse reaction in vitro, i.e. the transamination of LL-diaminopimelate with 2-oxoglutarate to produce tetrahydrodipicolinate and glutamate. Cannot use m-DAP, lysine or ornithine as the amino-group donor, when using 2-oxoglutarate as the amino-group acceptor. Cannot use pyruvate, indole 3-pyruvate, oxaloacetate or phenyl pyruvate as the amino-group acceptor, when using LL-DAP as the amino-group donor. In Leptospira interrogans serogroup Icterohaemorrhagiae serovar copenhageni (strain Fiocruz L1-130), this protein is LL-diaminopimelate aminotransferase.